We begin with the raw amino-acid sequence, 197 residues long: Potassium-transporting ATPase KdpC subunit (197 aa).

The chain crosses the membrane as a helical span at residues 7–27; it reads PALVSMGLFTVLLGLAYPLAV.

The protein belongs to the KdpC family. The system is composed of three essential subunits: KdpA, KdpB and KdpC.

Its subcellular location is the cell inner membrane. In terms of biological role, part of the high-affinity ATP-driven potassium transport (or Kdp) system, which catalyzes the hydrolysis of ATP coupled with the electrogenic transport of potassium into the cytoplasm. This subunit acts as a catalytic chaperone that increases the ATP-binding affinity of the ATP-hydrolyzing subunit KdpB by the formation of a transient KdpB/KdpC/ATP ternary complex. In Caulobacter vibrioides (strain ATCC 19089 / CIP 103742 / CB 15) (Caulobacter crescentus), this protein is Potassium-transporting ATPase KdpC subunit.